The following is a 383-amino-acid chain: 3-dehydroquinate synthase (383 aa).

NAD(+) is bound by residues 81-86 (EGEVSK), 115-119 (GVVGD), 139-140 (TS), K152, and K161. E194, H256, and H274 together coordinate Zn(2+).

It belongs to the sugar phosphate cyclases superfamily. Dehydroquinate synthase family. It depends on Co(2+) as a cofactor. The cofactor is Zn(2+). NAD(+) serves as cofactor.

The protein resides in the cytoplasm. The catalysed reaction is 7-phospho-2-dehydro-3-deoxy-D-arabino-heptonate = 3-dehydroquinate + phosphate. The protein operates within metabolic intermediate biosynthesis; chorismate biosynthesis; chorismate from D-erythrose 4-phosphate and phosphoenolpyruvate: step 2/7. Functionally, catalyzes the conversion of 3-deoxy-D-arabino-heptulosonate 7-phosphate (DAHP) to dehydroquinate (DHQ). The polypeptide is 3-dehydroquinate synthase (Nitrobacter winogradskyi (strain ATCC 25391 / DSM 10237 / CIP 104748 / NCIMB 11846 / Nb-255)).